The chain runs to 264 residues: Major prion protein 1 (264 aa).

Positions 1-24 (MVKSHIGSWILVLFVAMWSDVALC) are cleaved as a signal peptide. Residues 25–241 (KKRPKPGGGW…ESEAYYQRGA (217 aa)) form an interaction with GRB2, ERI3 and SYN1 region. The disordered stretch occupies residues 28–118 (PKPGGGWNTG…QWNKPSKPKT (91 aa)). Tandem repeats lie at residues 54 to 62 (SQGGGGWGQ), 63 to 70 (PHGGGWGQ), 71 to 78 (PHGGGWGQ), 79 to 86 (PHGGGWGQ), 87 to 94 (PHGGGWGQ), and 95 to 103 (PHGGGGWGQ). The interval 54–103 (SQGGGGWGQPHGGGWGQPHGGGWGQPHGGGWGQPHGGGWGQPHGGGGWGQ) is 6 X 8 AA tandem repeats of P-H-G-G-G-W-G-Q. Over residues 55–107 (QGGGGWGQPHGGGWGQPHGGGWGQPHGGGWGQPHGGGWGQPHGGGGWGQGGTH) the composition is skewed to gly residues. Cu(2+) contacts are provided by His-72, Gly-73, Gly-74, His-80, Gly-81, Gly-82, His-88, Gly-89, Gly-90, His-96, Gly-98, and Gly-99. Cys-190 and Cys-225 are oxidised to a cystine. 2 N-linked (GlcNAc...) asparagine glycosylation sites follow: Asn-192 and Asn-208. Ala-241 carries the GPI-anchor amidated alanine lipid modification. Positions 242–264 (SVILFSSPPVILLISFLIFLIVG) are cleaved as a propeptide — removed in mature form.

The protein belongs to the prion family. In terms of assembly, monomer and homodimer. Has a tendency to aggregate into amyloid fibrils containing a cross-beta spine, formed by a steric zipper of superposed beta-strands. Soluble oligomers may represent an intermediate stage on the path to fibril formation. Copper binding may promote oligomerization. Interacts with GRB2, APP, ERI3/PRNPIP and SYN1. Mislocalized cytosolically exposed PrP interacts with MGRN1; this interaction alters MGRN1 subcellular location and causes lysosomal enlargement. Interacts with KIAA1191.

The protein localises to the cell membrane. Its subcellular location is the golgi apparatus. Its function is as follows. Its primary physiological function is unclear. Has cytoprotective activity against internal or environmental stresses. May play a role in neuronal development and synaptic plasticity. May be required for neuronal myelin sheath maintenance. May play a role in iron uptake and iron homeostasis. Soluble oligomers are toxic to cultured neuroblastoma cells and induce apoptosis (in vitro). Association with GPC1 (via its heparan sulfate chains) targets PRNP to lipid rafts. Also provides Cu(2+) or Zn(2+) for the ascorbate-mediated GPC1 deaminase degradation of its heparan sulfate side chains. The protein is Major prion protein 1 of Tragelaphus strepsiceros (Greater kudu).